The chain runs to 526 residues: Reelin domain-containing protein 1 (526 aa).

A signal peptide spans 1-23; that stretch reads MRMQAALVGWACTTLCLASCSSA. The region spanning 24-179 is the Reelin domain; sequence FSHGASTVAC…SAHSDDRMEP (156 aa). The Extracellular portion of the chain corresponds to 24–443; sequence FSHGASTVAC…PLGIQLRTPQ (420 aa). Disordered stretches follow at residues 242 to 272, 294 to 336, and 370 to 398; these read DAETLSQPSSHTATEGSINQQPSGDSNPTLE, FASS…TVTQ, and LQTSGTSGLPAAGDQSEASRASASFLPQS. A compositionally biased stretch (polar residues) spans 245-271; that stretch reads TLSQPSSHTATEGSINQQPSGDSNPTL. The span at 385 to 396 shows a compositional bias: polar residues; sequence SEASRASASFLP. Residues 444 to 462 traverse the membrane as a helical segment; sequence LGILLCLSATLGMALAAGL. Residues 463 to 526 are Cytoplasmic-facing; sequence RYLHTQYCHQ…PSVGSKKTVL (64 aa).

The protein localises to the membrane. The chain is Reelin domain-containing protein 1 from Homo sapiens (Human).